The following is a 350-amino-acid chain: Glyceraldehyde-3-phosphate dehydrogenase (350 aa).

Residues 10–11, Asp36, Arg82, and Ser125 contribute to the NAD(+) site; that span reads RI. Residues 161–163, Thr193, 222–223, and Arg245 contribute to the D-glyceraldehyde 3-phosphate site; these read SCT and TG. Residue Cys162 is the Nucleophile of the active site. Asn331 contributes to the NAD(+) binding site.

The protein belongs to the glyceraldehyde-3-phosphate dehydrogenase family. As to quaternary structure, homotetramer.

Its subcellular location is the cytoplasm. It carries out the reaction D-glyceraldehyde 3-phosphate + phosphate + NAD(+) = (2R)-3-phospho-glyceroyl phosphate + NADH + H(+). It functions in the pathway carbohydrate degradation; glycolysis; pyruvate from D-glyceraldehyde 3-phosphate: step 1/5. Its function is as follows. Catalyzes the oxidative phosphorylation of glyceraldehyde 3-phosphate (G3P) to 1,3-bisphosphoglycerate (BPG) using the cofactor NAD. The first reaction step involves the formation of a hemiacetal intermediate between G3P and a cysteine residue, and this hemiacetal intermediate is then oxidized to a thioester, with concomitant reduction of NAD to NADH. The reduced NADH is then exchanged with the second NAD, and the thioester is attacked by a nucleophilic inorganic phosphate to produce BPG. In Treponema pallidum (strain Nichols), this protein is Glyceraldehyde-3-phosphate dehydrogenase (gap).